The primary structure comprises 424 residues: Hemagglutinin-esterase (424 aa).

The N-terminal stretch at 1-16 is a signal peptide; that stretch reads MFLLPRFVLVSCIIGS. An esterase domain 1 region spans residues 7–127; it reads FVLVSCIIGS…SNDIWMQNKG (121 aa). Residues 17–392 lie on the Virion surface side of the membrane; that stretch reads LGFENPPTNV…PICVYDPLPL (376 aa). The Nucleophile role is filled by S40. Residues C44 and C65 are joined by a disulfide bond. N-linked (GlcNAc...) asparagine; by host glycosylation is found at N54, N89, N153, N236, and N301. Cystine bridges form between C113-C162, C197-C276, and C205-C249. Residues 128–266 form a receptor binding region; the sequence is LFYTQVYKNM…GNYLAISNEL (139 aa). The segment at 267-379 is esterase domain 2; the sequence is LLTVPTKAIC…RCPTAADINT (113 aa). C307 and C312 are disulfide-bonded. Residue N316 is glycosylated (N-linked (GlcNAc...) asparagine; by host). Active-site charge relay system residues include D326 and H329. The cysteines at positions 347 and 371 are disulfide-linked. N358 carries an N-linked (GlcNAc...) asparagine; by host glycan. A helical transmembrane segment spans residues 393 to 413; the sequence is ILLGILLGVAVIIIVVLLLYF. Residues 414–424 lie on the Intravirion side of the membrane; that stretch reads MVDNGTRLHDA. Residue N417 is glycosylated (N-linked (GlcNAc...) asparagine; by host).

The protein belongs to the influenza type C/coronaviruses hemagglutinin-esterase family. In terms of assembly, homodimer; disulfide-linked. Forms a complex with the M protein in the pre-Golgi. Associates then with S-M complex to form a ternary complex S-M-HE. In terms of processing, N-glycosylated in the host RER.

It localises to the virion membrane. Its subcellular location is the host cell membrane. The enzyme catalyses N-acetyl-9-O-acetylneuraminate + H2O = N-acetylneuraminate + acetate + H(+). It carries out the reaction N-acetyl-4-O-acetylneuraminate + H2O = N-acetylneuraminate + acetate + H(+). Its function is as follows. Structural protein that makes short spikes at the surface of the virus. Contains receptor binding and receptor-destroying activities. Mediates de-O-acetylation of N-acetyl-4-O-acetylneuraminic acid, which is probably the receptor determinant recognized by the virus on the surface of erythrocytes and susceptible cells. This receptor-destroying activity is important for virus release as it probably helps preventing self-aggregation and ensures the efficient spread of the progeny virus from cell to cell. May serve as a secondary viral attachment protein for initiating infection, the spike protein being the major one. May become a target for both the humoral and the cellular branches of the immune system. This Bovine coronavirus (strain G95) (BCoV) protein is Hemagglutinin-esterase.